The following is a 483-amino-acid chain: Cobyric acid synthase (483 aa).

Positions 248–434 (ALRVVVPVLP…LHGLFEQPSA (187 aa)) constitute a GATase cobBQ-type domain. Cys329 acts as the Nucleophile in catalysis. Residue His426 is part of the active site.

This sequence belongs to the CobB/CobQ family. CobQ subfamily.

It participates in cofactor biosynthesis; adenosylcobalamin biosynthesis. Functionally, catalyzes amidations at positions B, D, E, and G on adenosylcobyrinic A,C-diamide. NH(2) groups are provided by glutamine, and one molecule of ATP is hydrogenolyzed for each amidation. The polypeptide is Cobyric acid synthase (Ectopseudomonas mendocina (strain ymp) (Pseudomonas mendocina)).